The primary structure comprises 190 residues: Threonylcarbamoyl-AMP synthase (190 aa).

The 184-residue stretch at 7–190 (RAALSDVLQA…ALTGKQFRQG (184 aa)) folds into the YrdC-like domain.

It belongs to the SUA5 family. TsaC subfamily.

It is found in the cytoplasm. It carries out the reaction L-threonine + hydrogencarbonate + ATP = L-threonylcarbamoyladenylate + diphosphate + H2O. In terms of biological role, required for the formation of a threonylcarbamoyl group on adenosine at position 37 (t(6)A37) in tRNAs that read codons beginning with adenine. Catalyzes the conversion of L-threonine, HCO(3)(-)/CO(2) and ATP to give threonylcarbamoyl-AMP (TC-AMP) as the acyladenylate intermediate, with the release of diphosphate. This chain is Threonylcarbamoyl-AMP synthase, found in Yersinia enterocolitica serotype O:8 / biotype 1B (strain NCTC 13174 / 8081).